We begin with the raw amino-acid sequence, 308 residues long: Coenzyme PQQ synthesis protein B (308 aa).

This sequence belongs to the PqqB family.

The protein operates within cofactor biosynthesis; pyrroloquinoline quinone biosynthesis. Its function is as follows. May be involved in the transport of PQQ or its precursor to the periplasm. This chain is Coenzyme PQQ synthesis protein B, found in Rhodopseudomonas palustris (strain TIE-1).